We begin with the raw amino-acid sequence, 402 residues long: Nicotinate phosphoribosyltransferase (402 aa).

H224 carries the phosphohistidine; by autocatalysis modification.

It belongs to the NAPRTase family. Post-translationally, transiently phosphorylated on a His residue during the reaction cycle. Phosphorylation strongly increases the affinity for substrates and increases the rate of nicotinate D-ribonucleotide production. Dephosphorylation regenerates the low-affinity form of the enzyme, leading to product release.

It carries out the reaction nicotinate + 5-phospho-alpha-D-ribose 1-diphosphate + ATP + H2O = nicotinate beta-D-ribonucleotide + ADP + phosphate + diphosphate. The protein operates within cofactor biosynthesis; NAD(+) biosynthesis; nicotinate D-ribonucleotide from nicotinate: step 1/1. In terms of biological role, catalyzes the synthesis of beta-nicotinate D-ribonucleotide from nicotinate and 5-phospho-D-ribose 1-phosphate at the expense of ATP. This Neisseria meningitidis serogroup B (strain ATCC BAA-335 / MC58) protein is Nicotinate phosphoribosyltransferase.